Here is an 86-residue protein sequence, read N- to C-terminus: Probable protein BRICK1 (86 aa).

Residues 47 to 81 adopt a coiled-coil conformation; that stretch reads EATTKSKLASLNEKLDILERKLEVLEVQVSSATTN.

It belongs to the BRK1 family. In terms of assembly, binds SCAR.

It localises to the cytoplasm. The protein resides in the cytoskeleton. In terms of biological role, involved in regulation of actin and microtubule organization. Part of a WAVE complex that activates the Arp2/3 complex. The polypeptide is Probable protein BRICK1 (Oryza sativa subsp. japonica (Rice)).